We begin with the raw amino-acid sequence, 35 residues long: Z-limacoditoxin(1)-Dv4 (35 aa).

Positions 1–22 (MKKTFLPIFLVILLASYALGNP) are cleaved as a signal peptide. A Pyrrolidone carboxylic acid modification is found at Q23. Proline amide is present on P32.

The protein belongs to the limacoditoxin-1 (ACP-like) family. In terms of tissue distribution, expressed by the venom secretory cell of the spine. The spine is a cuticular structure containing a single large nucleated venom-secreting cell at its base. It is an independent unit capable of producing, storing and injecting venom. On the back of D.vulnerans caterpillars, spines are grouped together by 50 to 100 to form scoli, of which there are eight in D.vulnerans.

It localises to the secreted. Its function is as follows. Potently activates insect GPCR. More precisely, it activates the ACP receptor (ACPR) from the mosquito A.aegypti (EC(50)=3.07 nM) with a potency comparable to that of the endogenous ligand. Has no activity on receptors of the closely related neuropeptides adipokinetic hormone and corazonin. In vivo, does not reveal any observable effects when injected into crickets (A.domesticus). Does not induce increase in intracellular calcium in mouse DRG neurons, suggesting that it does not induce pain. The sequence is that of Z-limacoditoxin(1)-Dv4 from Doratifera vulnerans (Mottled cup moth).